Reading from the N-terminus, the 492-residue chain is Malonate-semialdehyde dehydrogenase (492 aa).

6 residues coordinate NAD(+): Phe-156, Lys-180, Glu-183, Lys-184, Ser-233, and Thr-255. Residue Cys-288 is the Nucleophile of the active site. Glu-387 contributes to the NAD(+) binding site.

It belongs to the aldehyde dehydrogenase family. IolA subfamily. Homotetramer.

The catalysed reaction is 3-oxopropanoate + NAD(+) + CoA + H2O = hydrogencarbonate + acetyl-CoA + NADH + H(+). The enzyme catalyses 2-methyl-3-oxopropanoate + NAD(+) + CoA + H2O = propanoyl-CoA + hydrogencarbonate + NADH + H(+). The protein operates within polyol metabolism; myo-inositol degradation into acetyl-CoA; acetyl-CoA from myo-inositol: step 7/7. In terms of biological role, catalyzes the oxidation of malonate semialdehyde (MSA) and methylmalonate semialdehyde (MMSA) into acetyl-CoA and propanoyl-CoA, respectively. Is involved in a myo-inositol catabolic pathway. Bicarbonate, and not CO2, is the end-product of the enzymatic reaction. This chain is Malonate-semialdehyde dehydrogenase, found in Lacticaseibacillus casei (Lactobacillus casei).